Reading from the N-terminus, the 413-residue chain is Arginine deiminase (413 aa).

Cys403 (amidino-cysteine intermediate) is an active-site residue.

This sequence belongs to the arginine deiminase family.

It is found in the cytoplasm. It catalyses the reaction L-arginine + H2O = L-citrulline + NH4(+). The protein operates within amino-acid degradation; L-arginine degradation via ADI pathway; carbamoyl phosphate from L-arginine: step 1/2. This Clostridium perfringens (strain SM101 / Type A) protein is Arginine deiminase.